Reading from the N-terminus, the 178-residue chain is Protein GrpE (178 aa).

This sequence belongs to the GrpE family. As to quaternary structure, homodimer.

Its subcellular location is the cytoplasm. Participates actively in the response to hyperosmotic and heat shock by preventing the aggregation of stress-denatured proteins, in association with DnaK and GrpE. It is the nucleotide exchange factor for DnaK and may function as a thermosensor. Unfolded proteins bind initially to DnaJ; upon interaction with the DnaJ-bound protein, DnaK hydrolyzes its bound ATP, resulting in the formation of a stable complex. GrpE releases ADP from DnaK; ATP binding to DnaK triggers the release of the substrate protein, thus completing the reaction cycle. Several rounds of ATP-dependent interactions between DnaJ, DnaK and GrpE are required for fully efficient folding. The protein is Protein GrpE of Rickettsia africae (strain ESF-5).